The primary structure comprises 284 residues: Nucleotide-binding protein NMB0738 (284 aa).

8 to 15 (GLSGSGKS) provides a ligand contact to ATP. A GTP-binding site is contributed by 58–61 (DVRS).

This sequence belongs to the RapZ-like family.

Displays ATPase and GTPase activities. In Neisseria meningitidis serogroup B (strain ATCC BAA-335 / MC58), this protein is Nucleotide-binding protein NMB0738.